The following is a 173-amino-acid chain: ATP-dependent protease subunit HslV (173 aa).

Thr2 is an active-site residue. Residues Gly158, Asp161, and Thr164 each contribute to the Na(+) site.

The protein belongs to the peptidase T1B family. HslV subfamily. In terms of assembly, a double ring-shaped homohexamer of HslV is capped on each side by a ring-shaped HslU homohexamer. The assembly of the HslU/HslV complex is dependent on binding of ATP.

It is found in the cytoplasm. The catalysed reaction is ATP-dependent cleavage of peptide bonds with broad specificity.. Allosterically activated by HslU binding. Protease subunit of a proteasome-like degradation complex believed to be a general protein degrading machinery. This is ATP-dependent protease subunit HslV from Actinobacillus succinogenes (strain ATCC 55618 / DSM 22257 / CCUG 43843 / 130Z).